A 137-amino-acid chain; its full sequence is Large ribosomal subunit protein mL41 (137 aa).

Residues 1–13 (MGVLAAAARCLVR) constitute a mitochondrion transit peptide.

Belongs to the mitochondrion-specific ribosomal protein mL41 family. As to quaternary structure, component of the mitochondrial large ribosomal subunit (mt-LSU). Mature mammalian 55S mitochondrial ribosomes consist of a small (28S) and a large (39S) subunit. The 28S small subunit contains a 12S ribosomal RNA (12S mt-rRNA) and 30 different proteins. The 39S large subunit contains a 16S rRNA (16S mt-rRNA), a copy of mitochondrial valine transfer RNA (mt-tRNA(Val)), which plays an integral structural role, and 52 different proteins. Interacts with BCL2. As to expression, present in kidney, liver, thymus and testis, and at lower level in brain and spleen (at protein level).

It localises to the mitochondrion. Functionally, component of the mitochondrial ribosome large subunit. Also involved in apoptosis and cell cycle. Enhances p53/TP53 stability, thereby contributing to p53/TP53-induced apoptosis in response to growth-inhibitory condition. Enhances p53/TP53 translocation to the mitochondria. Has the ability to arrest the cell cycle at the G1 phase, possibly by stabilizing the CDKN1A and CDKN1B (p27Kip1) proteins. This is Large ribosomal subunit protein mL41 (MRPL41) from Homo sapiens (Human).